The primary structure comprises 461 residues: Ribulose bisphosphate carboxylase (461 aa).

Asn112 contributes to the substrate binding site. Residue Lys167 is the Proton acceptor of the active site. Lys169 provides a ligand contact to substrate. Positions 192, 194, and 195 each coordinate Mg(2+). Lys192 is subject to N6-carboxylysine. The Proton acceptor role is filled by His288. 3 residues coordinate substrate: Arg289, His322, and Ser369.

The protein belongs to the RuBisCO large chain family. Type II subfamily. In terms of assembly, homodimer. Mg(2+) is required as a cofactor.

The catalysed reaction is 2 (2R)-3-phosphoglycerate + 2 H(+) = D-ribulose 1,5-bisphosphate + CO2 + H2O. It carries out the reaction D-ribulose 1,5-bisphosphate + O2 = 2-phosphoglycolate + (2R)-3-phosphoglycerate + 2 H(+). In terms of biological role, ruBisCO catalyzes two reactions: the carboxylation of D-ribulose 1,5-bisphosphate, the primary event in carbon dioxide fixation, as well as the oxidative fragmentation of the pentose substrate. Both reactions occur simultaneously and in competition at the same active site. The protein is Ribulose bisphosphate carboxylase of Rhodopseudomonas palustris (strain HaA2).